The following is a 20-amino-acid chain: 54 kDa cell wall protein (20 aa).

Residues Lys1–Arg20 are disordered.

The protein resides in the secreted. It is found in the cell wall. The chain is 54 kDa cell wall protein from Arabidopsis thaliana (Mouse-ear cress).